Consider the following 198-residue polypeptide: Segregation and condensation protein B (198 aa).

The segment at 167 to 198 (PKLADPEAEDPDQSEMDLFFDRFNQSKEQEEE) is disordered. A compositionally biased stretch (acidic residues) spans 172–181 (PEAEDPDQSE).

This sequence belongs to the ScpB family. As to quaternary structure, homodimer. Homodimerization may be required to stabilize the binding of ScpA to the Smc head domains. Component of a cohesin-like complex composed of ScpA, ScpB and the Smc homodimer, in which ScpA and ScpB bind to the head domain of Smc. The presence of the three proteins is required for the association of the complex with DNA.

The protein resides in the cytoplasm. Participates in chromosomal partition during cell division. May act via the formation of a condensin-like complex containing Smc and ScpA that pull DNA away from mid-cell into both cell halves. This chain is Segregation and condensation protein B, found in Listeria innocua serovar 6a (strain ATCC BAA-680 / CLIP 11262).